Reading from the N-terminus, the 368-residue chain is Leu/Ile/Val-binding protein homolog 3 (368 aa).

The first 23 residues, 1–23 (MNLKLLSSVAFAATIGFASAAYA), serve as a signal peptide directing secretion.

This sequence belongs to the leucine-binding protein family.

Component of an amino-acid transport system. This Brucella melitensis biotype 1 (strain ATCC 23456 / CCUG 17765 / NCTC 10094 / 16M) protein is Leu/Ile/Val-binding protein homolog 3.